The sequence spans 217 residues: 3,4-dihydroxy-2-butanone 4-phosphate synthase (217 aa).

Residues arginine 37–glutamate 38, aspartate 42, arginine 150–threonine 154, and glutamate 174 each bind D-ribulose 5-phosphate. Residue glutamate 38 participates in Mg(2+) binding. Position 153 (histidine 153) interacts with Mg(2+).

It belongs to the DHBP synthase family. Homodimer. The cofactor is Mg(2+). It depends on Mn(2+) as a cofactor.

The enzyme catalyses D-ribulose 5-phosphate = (2S)-2-hydroxy-3-oxobutyl phosphate + formate + H(+). The protein operates within cofactor biosynthesis; riboflavin biosynthesis; 2-hydroxy-3-oxobutyl phosphate from D-ribulose 5-phosphate: step 1/1. In terms of biological role, catalyzes the conversion of D-ribulose 5-phosphate to formate and 3,4-dihydroxy-2-butanone 4-phosphate. This is 3,4-dihydroxy-2-butanone 4-phosphate synthase from Shewanella woodyi (strain ATCC 51908 / MS32).